A 276-amino-acid chain; its full sequence is MAIKKFKPTSNGRRNMSVSDFAEITTDTPEKSLLSPIRKRGGRNNQGKLTVRHQGGGHKRQYRIIDFKRDKDGIPGRVATIEYDPNRSANIALVHYADGEKRYIIAPKGIKVGQEIESGENADIKLGNALPLGSIPVGTVIHNIELKPGRGGQIARSAGAEAQILGREEKYTLVRLSSGEVRLILTTCRATIGQVGNIEHELVRVGKAGRSRWKGIRPTVRGSVMNPNDHPHGGGEGRAPIGRKSPMSPWGKPTLGYKTRQRNKPSDKYIVRKRKK.

Residues 219–276 form a disordered region; the sequence is TVRGSVMNPNDHPHGGGEGRAPIGRKSPMSPWGKPTLGYKTRQRNKPSDKYIVRKRKK.

The protein belongs to the universal ribosomal protein uL2 family. In terms of assembly, part of the 50S ribosomal subunit. Forms a bridge to the 30S subunit in the 70S ribosome.

Functionally, one of the primary rRNA binding proteins. Required for association of the 30S and 50S subunits to form the 70S ribosome, for tRNA binding and peptide bond formation. It has been suggested to have peptidyltransferase activity; this is somewhat controversial. Makes several contacts with the 16S rRNA in the 70S ribosome. The sequence is that of Large ribosomal subunit protein uL2 from Oceanobacillus iheyensis (strain DSM 14371 / CIP 107618 / JCM 11309 / KCTC 3954 / HTE831).